Consider the following 194-residue polypeptide: Leucyl/phenylalanyl-tRNA--protein transferase (194 aa).

Belongs to the L/F-transferase family.

It is found in the cytoplasm. The enzyme catalyses N-terminal L-lysyl-[protein] + L-leucyl-tRNA(Leu) = N-terminal L-leucyl-L-lysyl-[protein] + tRNA(Leu) + H(+). It carries out the reaction N-terminal L-arginyl-[protein] + L-leucyl-tRNA(Leu) = N-terminal L-leucyl-L-arginyl-[protein] + tRNA(Leu) + H(+). The catalysed reaction is L-phenylalanyl-tRNA(Phe) + an N-terminal L-alpha-aminoacyl-[protein] = an N-terminal L-phenylalanyl-L-alpha-aminoacyl-[protein] + tRNA(Phe). Functionally, functions in the N-end rule pathway of protein degradation where it conjugates Leu, Phe and, less efficiently, Met from aminoacyl-tRNAs to the N-termini of proteins containing an N-terminal arginine or lysine. The sequence is that of Leucyl/phenylalanyl-tRNA--protein transferase from Chlorobium limicola (strain DSM 245 / NBRC 103803 / 6330).